Here is a 125-residue protein sequence, read N- to C-terminus: PEP-dependent dihydroxyacetone kinase 2, phosphoryl donor subunit DhaM (125 aa).

The 125-residue stretch at Met1 to His125 folds into the PTS EIIA type-4 domain. Catalysis depends on His9, which acts as the Tele-phosphohistidine intermediate.

It belongs to the PEP-utilizing enzyme family. Homodimer. The dihydroxyacetone kinase complex is composed of a homodimer of DhaM, a homodimer of DhaK and the subunit DhaL.

The protein resides in the cytoplasm. It carries out the reaction dihydroxyacetone + phosphoenolpyruvate = dihydroxyacetone phosphate + pyruvate. Functionally, component of the dihydroxyacetone kinase complex, which is responsible for the phosphoenolpyruvate (PEP)-dependent phosphorylation of dihydroxyacetone. DhaM serves as the phosphoryl donor. Is phosphorylated by phosphoenolpyruvate in an EI- and HPr-dependent reaction, and a phosphorelay system on histidine residues finally leads to phosphoryl transfer to DhaL and dihydroxyacetone. The chain is PEP-dependent dihydroxyacetone kinase 2, phosphoryl donor subunit DhaM from Listeria innocua serovar 6a (strain ATCC BAA-680 / CLIP 11262).